A 358-amino-acid polypeptide reads, in one-letter code: Ribosomal RNA large subunit methyltransferase M (358 aa).

S-adenosyl-L-methionine is bound by residues Ser-183, Ala-216–Gly-219, Asp-235, Asp-255, and Asp-271. The Proton acceptor role is filled by Lys-300.

This sequence belongs to the class I-like SAM-binding methyltransferase superfamily. RNA methyltransferase RlmE family. RlmM subfamily. Monomer.

Its subcellular location is the cytoplasm. It carries out the reaction cytidine(2498) in 23S rRNA + S-adenosyl-L-methionine = 2'-O-methylcytidine(2498) in 23S rRNA + S-adenosyl-L-homocysteine + H(+). Functionally, catalyzes the 2'-O-methylation at nucleotide C2498 in 23S rRNA. This chain is Ribosomal RNA large subunit methyltransferase M, found in Pseudomonas fluorescens (strain SBW25).